The sequence spans 141 residues: Hemoglobin subunit alpha-A/A' (141 aa).

Residues 1–141 enclose the Globin domain; that stretch reads VLSANDKTNV…VGNVLTAKYR (141 aa). Residue H58 coordinates O2. H87 lines the heme b pocket.

It belongs to the globin family. As to quaternary structure, heterotetramer of two alpha chains and two beta chains. In terms of tissue distribution, red blood cells.

In terms of biological role, involved in oxygen transport from the lung to the various peripheral tissues. This is Hemoglobin subunit alpha-A/A' (HBAA) from Gyps rueppelli (Rueppell's griffon).